The primary structure comprises 127 residues: MHDDPRYRVEVEVSPRFLAHQSTPDEGRYAFAYSIRIQNAGAVPARLIARHWQITDGNGRTEQVDGEGVVGEQPRLRPGEAFHYTSGVLLETEQGQMQGHYDMVADDGTEFIAPIAAFVLSVPRTLH.

An ApaG domain is found at 3–127; it reads DDPRYRVEVE…FVLSVPRTLH (125 aa).

The protein is Protein ApaG of Xanthomonas oryzae pv. oryzae (strain MAFF 311018).